Here is a 135-residue protein sequence, read N- to C-terminus: UPF0201 protein TON_1346 (135 aa).

Belongs to the UPF0201 family.

This chain is UPF0201 protein TON_1346, found in Thermococcus onnurineus (strain NA1).